Reading from the N-terminus, the 568-residue chain is Acyl-CoA ligase gloD (568 aa).

Residues 211-219 (TSGTSGFLK), 352-357 (PGYGLT), Asp-436, Arg-455, and Lys-553 each bind ATP. Residues 282–352 (DMQIALKSVQ…QLCPEWEINP (71 aa)) form an SBD1 region. The interval 353-415 (GYGLTESFVC…VRSPSVMKEY (63 aa)) is SBD2.

It belongs to the ATP-dependent AMP-binding enzyme family.

Its pathway is mycotoxin biosynthesis. Its function is as follows. Acyl-CoA ligase; part of the gene cluster that mediates the biosynthesis of pneumocandins, lipohexapeptides of the echinocandin family that prevent fungal cell wall formation by non-competitive inhibition of beta-1,3-glucan synthase. The 10,12-dimethylmyristoyl side chain is synthesized by the reducing polyketide synthase gloL/GLPKS4. The thioesterase gloN/GLHYD exclusively interacts with gloL/GLPKS4 to maintain turnover of the polyketide side chain. The 10R,12S-dimethylmyristic acid is then transferred to the first thiolation domain of the nonribosomal peptide synthetase gloA/GLNRPS4 by the acyl-AMP ligase gloD/GLligase, followed by its acylation to L-ornithine to trigger elongation of the cyclic hexapeptide. L-ornithine, 4R-hydroxyl-L-proline (generated from L-proline by the dioxygenase gloF/GLOXY2), 3S-hydroxyl-L-homotyrosine (generated by gloG/GLHtyB, gloH/GLHtyA, gloI/GLHtyC, gloJ/GLHtyD and hydroxylated at C-3 by the dioxygenase gloM/GLOXY1), 3R-hydroxyl-L-glutamine (generated from L-glutamine probably by the dioxygenase gloE/GLOXY3) and 3S-hydroxyl-L-proline (generated from L-proline by the dioxygenase gloF/GLOXY2 to yield pneumocandin B0), or 3S-hydroxyl-4S-methyl-L-proline (generated from L-leucine by the dioxygenase gloC/GLOXY4 to yield pneumocandin A0) are sequentially added to the growing chain. The last C domain of gloA/GLNRPS4 is proposed to be responsible for cyclization by condensation to form the peptide bond between L-ornithine and 3S-hydroxyl-4S-methyl-L-proline (for pneumocandin A0) or 3S-hydroxyl-L-proline (for pneumocandin B0). Finally, the subsequent C-4 hydroxylation of 3S-hydroxyl-L-homotyrosine and L-ornithine dihydroxylation at C-4 and C-5 are performed by the cytochrome P450 monooxygenases gloP/GLP450-1 and gloO/GLP450-2, respectively. The sequence is that of Acyl-CoA ligase gloD from Glarea lozoyensis (strain ATCC 20868 / MF5171).